We begin with the raw amino-acid sequence, 558 residues long: Putative transposase for insertion sequence IS1162 (558 aa).

The region spanning I11–L93 is the HTH IS408-type domain. The segment at residues L23 to T44 is a DNA-binding region (H-T-H motif). The Integrase catalytic domain occupies Q139–R336. The segment at Q486 to R558 is disordered.

This sequence belongs to the transposase IS21/IS408/IS1162 family.

Required for the transposition of the insertion element. This is Putative transposase for insertion sequence IS1162 from Pseudomonas fluorescens.